A 327-amino-acid polypeptide reads, in one-letter code: Surface protein P12p (327 aa).

2 consecutive 6-Cys domains span residues 21–168 (NIEI…LKKN) and 169–304 (IIFG…FSNY). Intrachain disulfides connect C25–C60, C74–C144, C93–C142, C173–C208, C223–C285, and C234–C283. Residues N246, N264, and N298 are each glycosylated (N-linked (GlcNAc...) asparagine).

It localises to the cell surface. It is found in the cell membrane. This Plasmodium berghei (strain Anka) protein is Surface protein P12p (P12p).